Consider the following 207-residue polypeptide: GILT-like protein 2 (207 aa).

Residues Met1–Pro19 form the signal peptide. A disulfide bridge connects residues Cys40 and Cys43. Residue Asn182 is glycosylated (N-linked (GlcNAc...) asparagine).

It belongs to the GILT family.

The protein localises to the secreted. Functionally, probable lysosomal thiol reductase that can reduce protein disulfide bonds. Involved in the immune response to bacterial infection. The protein is GILT-like protein 2 of Drosophila melanogaster (Fruit fly).